The following is a 47-amino-acid chain: Large ribosomal subunit protein bL34 (47 aa).

Residues 1-28 are disordered; sequence MAKGKRTFQPNNRRRARVHGFRTRMRTR.

This sequence belongs to the bacterial ribosomal protein bL34 family.

This is Large ribosomal subunit protein bL34 from Corynebacterium efficiens (strain DSM 44549 / YS-314 / AJ 12310 / JCM 11189 / NBRC 100395).